A 773-amino-acid polypeptide reads, in one-letter code: Acyl-homoserine lactone acylase PvdQ (773 aa).

A signal peptide spans 1–23 (MSRALPGFLFAGLSVAVVLPAQA). The propeptide at 200–221 (SQQVQALQLAAARNERFALERG) is spacer peptide. The active-site Nucleophile is the S222.

The protein belongs to the peptidase S45 family. As to quaternary structure, heterodimer of an alpha subunit and a beta subunit processed from the same precursor.

Its subcellular location is the periplasm. The catalysed reaction is an N-acyl-L-homoserine lactone + H2O = L-homoserine lactone + a carboxylate. Catalyzes the deacylation of acyl-homoserine lactone (AHL or acyl-HSL), releasing homoserine lactone (HSL) and the corresponding fatty acid. Possesses a specificity for the degradation of long-chain acyl-HSLs (side chains of 11 to 14 carbons in length). This chain is Acyl-homoserine lactone acylase PvdQ (pvdQ), found in Pseudomonas syringae pv. tomato (strain ATCC BAA-871 / DC3000).